Consider the following 446-residue polypeptide: Histidine--tRNA ligase (446 aa).

The disordered stretch occupies residues 403 to 422 (TASVKPLRGTGDDGEKSVQQ).

It belongs to the class-II aminoacyl-tRNA synthetase family. As to quaternary structure, homodimer.

Its subcellular location is the cytoplasm. The catalysed reaction is tRNA(His) + L-histidine + ATP = L-histidyl-tRNA(His) + AMP + diphosphate + H(+). The sequence is that of Histidine--tRNA ligase from Burkholderia thailandensis (strain ATCC 700388 / DSM 13276 / CCUG 48851 / CIP 106301 / E264).